We begin with the raw amino-acid sequence, 300 residues long: tRNA dimethylallyltransferase (300 aa).

Residue 8-15 participates in ATP binding; the sequence is GASASGKS. Substrate is bound at residue 10–15; that stretch reads SASGKS. The interaction with substrate tRNA stretch occupies residues 33–36; it reads DSLS.

Belongs to the IPP transferase family. In terms of assembly, monomer. Requires Mg(2+) as cofactor.

The enzyme catalyses adenosine(37) in tRNA + dimethylallyl diphosphate = N(6)-dimethylallyladenosine(37) in tRNA + diphosphate. In terms of biological role, catalyzes the transfer of a dimethylallyl group onto the adenine at position 37 in tRNAs that read codons beginning with uridine, leading to the formation of N6-(dimethylallyl)adenosine (i(6)A). The chain is tRNA dimethylallyltransferase from Wolinella succinogenes (strain ATCC 29543 / DSM 1740 / CCUG 13145 / JCM 31913 / LMG 7466 / NCTC 11488 / FDC 602W) (Vibrio succinogenes).